A 601-amino-acid polypeptide reads, in one-letter code: MALSFFGGGGASHLKYFDIRLDEDYIVFRGGEQEAASAQLSGKLLLCLSEPLSVKHVRLNLTGISRVCWHLPSSSATGGRKSWREKVFYEKSWTFRDAGKSKTEILAAGNYEFPFHVILEGSMPESVEGLSDTYVTYRFKAEIGRKYAKDIVVRKPLRIIRTLDSSALELSHAMSVENIWPNKIEYSISTPTKAVIFGTSIRVDFKLIPLLKGLKIGQIVSQLIESHDLTLNPEDPDSVRNTYKNTRTIVNDEHELDEEGNLEIIDEAAEGYQFSRFLDLPKTLTRCLQDTDTRGIKIRHKLKFRVQLLNPDGHISELRATLPVSIFISPNLAIDDNNNLVDQTPQSAQRAVNDLAQQAPPLYGEHQFDQLYSEVDPSGYRTPGPGSGPGTPFGTLSRNLSAENLASMNALTNTDISASALHSRLSNLHASRFSNPSPSDADGHTDAEYRRLGVSTDSFGPSSGSNSQSPASPELSRRPSDEGYHDHDYIPSGMATPFHPQFAEVESLSRVPSYSTAVRSSVGPCDSELPDYQAVVAEDTAMPTLQSPQQAHIRSVGRGVSTGHTGIDVHHLRSGFFNSRTSAHHDDDDRRLRLVQARARV.

2 disordered regions span residues 374–397 (EVDPSGYRTPGPGSGPGTPFGTLS) and 454–496 (VSTD…GMAT). Low complexity predominate over residues 455-473 (STDSFGPSSGSNSQSPASP). Positions 475–489 (LSRRPSDEGYHDHDY) are enriched in basic and acidic residues.

The protein belongs to the arrestin family. As to quaternary structure, interacts with hulA.

Functionally, component of the regulatory network controlling carbon source utilization through ubiquitination and deubiquitination involving creA, creB, creC, creD and acrB. May be involved in signaling by recognizing appropriately phosphorylated substrates via its arrestin domains and then recruit a HECT-type ubiquitin ligase such as hulA, leading to ubiquitination of the substrate, providing a link between ubiquitination and phosphorylation in protein regulation and stability. The protein is Probable HECT-type ubiquitin ligase-interacting protein creD (creD) of Aspergillus fumigatus (strain CBS 144.89 / FGSC A1163 / CEA10) (Neosartorya fumigata).